We begin with the raw amino-acid sequence, 379 residues long: Queuine tRNA-ribosyltransferase (379 aa).

D94 acts as the Proton acceptor in catalysis. Residues 94–98 (DSGGF), D148, Q191, and G218 contribute to the substrate site. The RNA binding stretch occupies residues 249-255 (GVGSPDA). The active-site Nucleophile is the D268. Positions 273-277 (TRIAR) are RNA binding; important for wobble base 34 recognition. 4 residues coordinate Zn(2+): C306, C308, C311, and H337.

It belongs to the queuine tRNA-ribosyltransferase family. Homodimer. Within each dimer, one monomer is responsible for RNA recognition and catalysis, while the other monomer binds to the replacement base PreQ1. Zn(2+) is required as a cofactor.

It catalyses the reaction 7-aminomethyl-7-carbaguanine + guanosine(34) in tRNA = 7-aminomethyl-7-carbaguanosine(34) in tRNA + guanine. The protein operates within tRNA modification; tRNA-queuosine biosynthesis. Catalyzes the base-exchange of a guanine (G) residue with the queuine precursor 7-aminomethyl-7-deazaguanine (PreQ1) at position 34 (anticodon wobble position) in tRNAs with GU(N) anticodons (tRNA-Asp, -Asn, -His and -Tyr). Catalysis occurs through a double-displacement mechanism. The nucleophile active site attacks the C1' of nucleotide 34 to detach the guanine base from the RNA, forming a covalent enzyme-RNA intermediate. The proton acceptor active site deprotonates the incoming PreQ1, allowing a nucleophilic attack on the C1' of the ribose to form the product. After dissociation, two additional enzymatic reactions on the tRNA convert PreQ1 to queuine (Q), resulting in the hypermodified nucleoside queuosine (7-(((4,5-cis-dihydroxy-2-cyclopenten-1-yl)amino)methyl)-7-deazaguanosine). The chain is Queuine tRNA-ribosyltransferase from Oceanobacillus iheyensis (strain DSM 14371 / CIP 107618 / JCM 11309 / KCTC 3954 / HTE831).